Here is a 156-residue protein sequence, read N- to C-terminus: Small ribosomal subunit protein uS7 (156 aa).

Belongs to the universal ribosomal protein uS7 family. Part of the 30S ribosomal subunit. Contacts proteins S9 and S11.

In terms of biological role, one of the primary rRNA binding proteins, it binds directly to 16S rRNA where it nucleates assembly of the head domain of the 30S subunit. Is located at the subunit interface close to the decoding center, probably blocks exit of the E-site tRNA. The chain is Small ribosomal subunit protein uS7 from Rhodopseudomonas palustris (strain BisB18).